Consider the following 268-residue polypeptide: Riboflavin transport system permease protein RibX (268 aa).

6 helical membrane passes run 24–44 (ALGLPVTLMLLLVFWQAGVTL), 76–96 (LATLSAALGGFTLALIIALIL), 119–139 (AIPVVAVAPLIILWFGAGLTS), 140–160 (KVLVAALITFLPILINTVVAI), 185–205 (VEAPLALPVLFGGVRTGLALA), and 236–256 (LIFVALATLALITLTLYVLAG). In terms of domain architecture, ABC transmembrane type-1 spans 75-255 (TLATLSAALG…LITLTLYVLA (181 aa)).

It belongs to the binding-protein-dependent transport system permease family. In terms of assembly, the complex is likely composed of an ATP-binding protein, a transmembrane protein (RibX) and a solute-binding protein (RibY).

The protein localises to the cell membrane. Functionally, part of an ABC transporter complex that transports riboflavin into the cell. This is Riboflavin transport system permease protein RibX from Chloroflexus aurantiacus (strain ATCC 29366 / DSM 635 / J-10-fl).